Consider the following 402-residue polypeptide: mRNA-capping enzyme subunit alpha (402 aa).

Lys-66 functions as the N6-GMP-lysine intermediate in the catalytic mechanism.

It belongs to the eukaryotic GTase family. In terms of assembly, heterodimer. The mRNA-capping enzyme is composed of two separate chains alpha and beta, respectively a mRNA guanylyltransferase and an mRNA 5'-triphosphate monophosphatase.

It is found in the nucleus. The enzyme catalyses a 5'-end diphospho-ribonucleoside in mRNA + GTP + H(+) = a 5'-end (5'-triphosphoguanosine)-ribonucleoside in mRNA + diphosphate. Functionally, second step of mRNA capping. Transfer of the GMP moiety of GTP to the 5'-end of RNA via an enzyme-GMP covalent reaction intermediate. This chain is mRNA-capping enzyme subunit alpha (rnp-2), found in Neurospora crassa (strain ATCC 24698 / 74-OR23-1A / CBS 708.71 / DSM 1257 / FGSC 987).